The chain runs to 396 residues: Tryptophan synthase beta chain (396 aa).

Lys-88 carries the post-translational modification N6-(pyridoxal phosphate)lysine.

The protein belongs to the TrpB family. As to quaternary structure, tetramer of two alpha and two beta chains. Pyridoxal 5'-phosphate is required as a cofactor.

It carries out the reaction (1S,2R)-1-C-(indol-3-yl)glycerol 3-phosphate + L-serine = D-glyceraldehyde 3-phosphate + L-tryptophan + H2O. The protein operates within amino-acid biosynthesis; L-tryptophan biosynthesis; L-tryptophan from chorismate: step 5/5. The beta subunit is responsible for the synthesis of L-tryptophan from indole and L-serine. In Actinobacillus pleuropneumoniae serotype 7 (strain AP76), this protein is Tryptophan synthase beta chain.